Here is a 421-residue protein sequence, read N- to C-terminus: uncharacterized protein (421 aa).

This is an uncharacterized protein from Escherichia coli (strain K12).